The sequence spans 1347 residues: BTB/POZ domain-containing protein 1 (1347 aa).

ANK repeat units follow at residues 51–81 (YGRTVLHIAVSENKNSFVRSLLQHKGIDVFV) and 86–115 (SGYTALHRAIYVGNLEAASLLLSKDPSFRS). RCC1 repeat units follow at residues 148–198 (GNEL…DKIL), 215–264 (SQNV…ALTK), 265–322 (FGSI…AWTD), and 324–372 (DIYS…CLLQ). BTB domains are found at residues 619–698 (SDVT…LSPW) and 758–829 (MDTV…VELF). Disordered regions lie at residues 1006 to 1029 (SSNQSDSLNKEDAEEKSPKPNVVN), 1104 to 1139 (EKADASTTTVLSDSRFMKAPTKKSQREKKKELSKQV), 1193 to 1237 (EGSS…PLSI), and 1286 to 1347 (GILK…RAVK). Over residues 1013–1023 (LNKEDAEEKSP) the composition is skewed to basic and acidic residues. Composition is skewed to polar residues over residues 1208-1237 (SNGSPTSWNLLTKPSPRSASLPKNSQPLSI) and 1297-1306 (NRKQGQASKQ). Over residues 1336 to 1347 (TTHKKGKARAVK) the composition is skewed to basic residues.

Interacts with cul3.

It functions in the pathway protein modification; protein ubiquitination. Probable substrate-specific adapter of an E3 ubiquitin-protein ligase complex which mediates the ubiquitination and subsequent proteasomal degradation of target proteins. The protein is BTB/POZ domain-containing protein 1 (btb1) of Schizosaccharomyces pombe (strain 972 / ATCC 24843) (Fission yeast).